We begin with the raw amino-acid sequence, 463 residues long: ATP synthase subunit beta (463 aa).

ATP is bound at residue 152 to 159 (GGAGVGKT).

It belongs to the ATPase alpha/beta chains family. In terms of assembly, F-type ATPases have 2 components, CF(1) - the catalytic core - and CF(0) - the membrane proton channel. CF(1) has five subunits: alpha(3), beta(3), gamma(1), delta(1), epsilon(1). CF(0) has three main subunits: a(1), b(2) and c(9-12). The alpha and beta chains form an alternating ring which encloses part of the gamma chain. CF(1) is attached to CF(0) by a central stalk formed by the gamma and epsilon chains, while a peripheral stalk is formed by the delta and b chains.

The protein localises to the cell inner membrane. It catalyses the reaction ATP + H2O + 4 H(+)(in) = ADP + phosphate + 5 H(+)(out). Produces ATP from ADP in the presence of a proton gradient across the membrane. The catalytic sites are hosted primarily by the beta subunits. The protein is ATP synthase subunit beta of Shewanella sp. (strain ANA-3).